The sequence spans 109 residues: Staphostatin B (109 aa).

The interval 97–101 (IGTSR) is binds to staphopain B.

Belongs to the protease inhibitor I57 (SspC) family. As to quaternary structure, forms a stable non-covalent complex with prematurely activated/folded SspB.

The protein resides in the cytoplasm. Its function is as follows. Specifically inhibits the cysteine protease staphopain B (SspB) by blocking the active site of the enzyme. Probably required to protect cytoplasmic proteins from being degraded by prematurely activated/folded prostaphopain B. Also involved in growth capacity, viability and bacterial morphology. The polypeptide is Staphostatin B (sspC) (Staphylococcus aureus (strain NCTC 8325 / PS 47)).